A 258-amino-acid chain; its full sequence is F-box/SPRY domain-containing protein 1 (258 aa).

In terms of domain architecture, F-box spans 6 to 54 (MEYAPNIPDNVLELIFSFLKLQDLRNCTLVCKSWYRFFCDENNEVWRAQ). Residues 64 to 256 (FKNDLLTVVP…ISMVYLGAPL (193 aa)) enclose the B30.2/SPRY domain.

This sequence belongs to the FBXO45/Fsn family. As to quaternary structure, component of an E3 ubiquitin ligase complex composed of hiw and Fsn.

The protein resides in the synapse. Its pathway is protein modification; protein ubiquitination. Required in the presynaptic motoneuron to down-regulate the levels of wnd and restrain synaptic terminal growth at the neuromuscular junction (NMJ). The polypeptide is F-box/SPRY domain-containing protein 1 (Anopheles gambiae (African malaria mosquito)).